Here is a 172-residue protein sequence, read N- to C-terminus: C-phycocyanin-2 beta subunit (172 aa).

Asn72 bears the N4-methylasparagine mark. Residues Cys82 and Cys153 each contribute to the (2R,3E)-phycocyanobilin site.

It belongs to the phycobiliprotein family. Heterodimer of an alpha and a beta subunit, which further assembles into trimers and the trimers into hexamers. Post-translationally, contains two covalently linked bilin chromophores.

The protein resides in the cellular thylakoid membrane. Light-harvesting photosynthetic bile pigment-protein from the phycobiliprotein complex (phycobilisome, PBS). Phycocyanin is the major phycobiliprotein in the PBS rod. The polypeptide is C-phycocyanin-2 beta subunit (cpcB2) (Microchaete diplosiphon (Fremyella diplosiphon)).